We begin with the raw amino-acid sequence, 408 residues long: Centromere protein U (408 aa).

Residues 1-33 are compositionally biased toward basic residues; it reads DRPRPARLSHARFSKNHSGRTHSMKDKAGRKHR. Residues 1-218 are disordered; sequence DRPRPARLSH…GKRKKPRSYT (218 aa). Thr-72 carries the phosphothreonine; by PLK1 modification. Thr-92 is modified (phosphothreonine). The segment covering 94–103 has biased composition (basic and acidic residues); that stretch reads QEKEAKRSSD. Ser-102 bears the Phosphoserine mark. Thr-104 bears the Phosphothreonine mark. Phosphoserine occurs at positions 105, 110, and 114. The span at 118 to 127 shows a compositional bias: basic residues; sequence SAKKPRRKLK. Phosphoserine is present on residues Ser-130, Ser-133, and Ser-135. Residues 176–186 show a composition bias toward polar residues; that stretch reads PQKTGPQSAES. A Glycyl lysine isopeptide (Lys-Gly) (interchain with G-Cter in SUMO2) cross-link involves residue Lys-178. Ser-183 and Ser-187 each carry phosphoserine. Thr-192 carries the post-translational modification Phosphothreonine. A Phosphoserine modification is found at Ser-222. The stretch at 273–350 forms a coiled coil; the sequence is SNLKEELIKM…LRKAAYFLSN (78 aa). The Nuclear localization signal motif lies at 293–310; that stretch reads KRKNAKIISNIEKKRQRL.

Belongs to the CENP-U/AME1 family. As to quaternary structure, component of the CENPA-NAC complex, at least composed of CENPA, CENPC, CENPH, CENPM, CENPN, CENPT and CENPU. The CENPA-NAC complex interacts with the CENPA-CAD complex, composed of CENPI, CENPK, CENPL, CENPO, CENPP, CENPQ, CENPR and CENPS. Interacts with MLF1. Post-translationally, phosphorylated by PLK1 at Thr-72, creating a self-tethering site that specifically interacts with the polo-box domain of PLK1.

The protein localises to the cytoplasm. It is found in the nucleus. The protein resides in the chromosome. Its subcellular location is the centromere. It localises to the kinetochore. Functionally, component of the CENPA-NAC (nucleosome-associated) complex, a complex that plays a central role in assembly of kinetochore proteins, mitotic progression and chromosome segregation. The CENPA-NAC complex recruits the CENPA-CAD (nucleosome distal) complex and may be involved in incorporation of newly synthesized CENPA into centromeres. Plays an important role in the correct PLK1 localization to the mitotic kinetochores. A scaffold protein responsible for the initial recruitment and maintenance of the kinetochore PLK1 population until its degradation. Involved in transcriptional repression. This chain is Centromere protein U (CENPU), found in Bos taurus (Bovine).